Here is an 857-residue protein sequence, read N- to C-terminus: Envelope glycoprotein B (857 aa).

Positions 1-21 are cleaved as a signal peptide; the sequence is MTRRRVLSVVVLLAALACRLG. The Virion surface segment spans residues 22-732; the sequence is AQTPEQPAPP…SGFISFFKNP (711 aa). 5 disulfides stabilise this stretch: Cys-51/Cys-528, Cys-68/Cys-484, Cys-141/Cys-206, Cys-295/Cys-342, and Cys-551/Cys-588. Asn-76 carries N-linked (GlcNAc...) asparagine; by host glycosylation. Residues 108–114 form an involved in fusion and/or binding to host membrane region; sequence IYNGWYA. Asn-163 is a glycosylation site (N-linked (GlcNAc...) asparagine; by host). The interval 192-200 is involved in fusion and/or binding to host membrane; the sequence is GWLIWTYRT. Residues Asn-290, Asn-329, Asn-348, and Asn-395 are each glycosylated (N-linked (GlcNAc...) asparagine; by host). Residues 398 to 452 form a disordered region; that stretch reads ELTTPTSSPPSSPSPPAPPAARGSTSAAVLRRRRRDAGNATTPVPPAAPGKSLGT. Residues 404–416 are compositionally biased toward pro residues; the sequence is SSPPSSPSPPAPP. N-linked (GlcNAc...) asparagine; by host glycans are attached at residues Asn-436, Asn-563, and Asn-629. 2 hydrophobic membrane proximal region regions span residues 678 to 730 and 709 to 729; these read LDNA…SFFK and NLVS…ISFF. The chain crosses the membrane as a helical span at residues 733 to 753; the sequence is FGGMLILVLVAGVVILVISLT. Residues 754–857 lie on the Intravirion side of the membrane; that stretch reads RRTRQMSQQP…ALLGEAETEF (104 aa). Residues 832-857 form a disordered region; sequence FPGLRRRRYHDPETAAALLGEAETEF. The span at 845–857 shows a compositional bias: low complexity; sequence TAAALLGEAETEF.

The protein belongs to the herpesviridae glycoprotein B family. As to quaternary structure, homotrimer; disulfide-linked. Binds to heparan sulfate proteoglycans. Interacts with gH/gL heterodimer. Post-translationally, a proteolytic cleavage by host furin generates two subunits that remain linked by disulfide bonds.

The protein resides in the virion membrane. It is found in the host cell membrane. The protein localises to the host endosome membrane. Its subcellular location is the host Golgi apparatus membrane. Functionally, envelope glycoprotein that forms spikes at the surface of virion envelope. Essential for the initial attachment to heparan sulfate moieties of the host cell surface proteoglycans. Involved in fusion of viral and cellular membranes leading to virus entry into the host cell. Following initial binding to its host receptors, membrane fusion is mediated by the fusion machinery composed at least of gB and the heterodimer gH/gL. May be involved in the fusion between the virion envelope and the outer nuclear membrane during virion egress. The sequence is that of Envelope glycoprotein B from Epstein-Barr virus (strain GD1) (HHV-4).